We begin with the raw amino-acid sequence, 831 residues long: Periplasmic nitrate reductase (831 aa).

The segment at residues 1–31 (MKLSRRDFMKANAAVAAAAAAGLTIPTVAKA) is a signal peptide (tat-type signal). Positions 40–96 (IKWDKAPCRFCGTGCGVLVGTQNGRIVASQGDPDSPVNRGLNCVKGYFLPKIMYGKD) constitute a 4Fe-4S Mo/W bis-MGD-type domain. [4Fe-4S] cluster contacts are provided by Cys47, Cys50, Cys54, and Cys82. Mo-bis(molybdopterin guanine dinucleotide) contacts are provided by residues Lys84, Gln151, Asn176, Cys180, 213–220 (WGSNMAEM), 244–248 (STFEH), 263–265 (QTD), Met373, Gln377, Asn483, 509–510 (SD), Lys532, Asp559, and 719–728 (TGRVLEHWHT). Phe795 provides a ligand contact to substrate. Residues Asn803 and Lys820 each contribute to the Mo-bis(molybdopterin guanine dinucleotide) site.

The protein belongs to the prokaryotic molybdopterin-containing oxidoreductase family. NasA/NapA/NarB subfamily. Component of the periplasmic nitrate reductase NapAB complex composed of NapA and NapB. [4Fe-4S] cluster is required as a cofactor. It depends on Mo-bis(molybdopterin guanine dinucleotide) as a cofactor. In terms of processing, predicted to be exported by the Tat system. The position of the signal peptide cleavage has not been experimentally proven.

It localises to the periplasm. It catalyses the reaction 2 Fe(II)-[cytochrome] + nitrate + 2 H(+) = 2 Fe(III)-[cytochrome] + nitrite + H2O. Its function is as follows. Catalytic subunit of the periplasmic nitrate reductase complex NapAB. Receives electrons from NapB and catalyzes the reduction of nitrate to nitrite. The protein is Periplasmic nitrate reductase of Yersinia enterocolitica serotype O:8 / biotype 1B (strain NCTC 13174 / 8081).